A 179-amino-acid polypeptide reads, in one-letter code: O-acetyl-ADP-ribose deacetylase (179 aa).

One can recognise a Macro domain in the interval 1 to 175; sequence MTSRLQVIQG…LYARLLTQQG (175 aa). Residues 11–12, Asn25, 33–35, and 122–126 contribute to the substrate site; these read DI, GVD, and STGVY. Catalysis depends on Asp35, which acts as the Proton acceptor.

The protein belongs to the MacroD-type family. YmdB subfamily. As to quaternary structure, homodimer. Interacts with RNase III.

It carries out the reaction 3''-O-acetyl-ADP-D-ribose + H2O = ADP-D-ribose + acetate + H(+). It catalyses the reaction 2''-O-acetyl-ADP-D-ribose + H2O = ADP-D-ribose + acetate + H(+). Deacetylates O-acetyl-ADP ribose to yield ADP-ribose and free acetate. Down-regulates ribonuclease 3 (RNase III) activity. Acts by interacting directly with the region of the ribonuclease that is required for dimerization/activation. The polypeptide is O-acetyl-ADP-ribose deacetylase (Salmonella gallinarum (strain 287/91 / NCTC 13346)).